The primary structure comprises 314 residues: Homoserine kinase (314 aa).

Position 95–105 (95–105 (PHSRGLGSSAA)) interacts with ATP.

Belongs to the GHMP kinase family. Homoserine kinase subfamily.

It localises to the cytoplasm. It catalyses the reaction L-homoserine + ATP = O-phospho-L-homoserine + ADP + H(+). It participates in amino-acid biosynthesis; L-threonine biosynthesis; L-threonine from L-aspartate: step 4/5. In terms of biological role, catalyzes the ATP-dependent phosphorylation of L-homoserine to L-homoserine phosphate. In Mycobacterium sp. (strain JLS), this protein is Homoserine kinase.